Consider the following 285-residue polypeptide: Putative alkaline ceramidase dcd3B (285 aa).

The next 3 membrane-spanning stretches (helical) occupy residues 34–54 (TFSS…MMSA), 77–97 (VLFS…YHAT), and 104–124 (LFDE…ILTI). An N-linked (GlcNAc...) asparagine glycan is attached at Asn131. The next 4 helical transmembrane spans lie at 141–161 (RFLP…ITII), 166–186 (IILQ…SYMY), 200–220 (PKKF…SWLT), and 236–256 (LHAV…QFFI).

Belongs to the alkaline ceramidase family.

The protein localises to the membrane. This Dictyostelium discoideum (Social amoeba) protein is Putative alkaline ceramidase dcd3B (dcd3B).